Here is a 476-residue protein sequence, read N- to C-terminus: Adenosylhomocysteinase (476 aa).

Substrate is bound by residues T67, D142, and E202. NAD(+) is bound at residue 203–205 (TTT). Substrate-binding residues include K232 and D236. Residues N237, 266-271 (GYGDVG), E289, N324, 345-347 (IGH), and N390 contribute to the NAD(+) site.

Belongs to the adenosylhomocysteinase family. NAD(+) is required as a cofactor.

Its subcellular location is the cytoplasm. The enzyme catalyses S-adenosyl-L-homocysteine + H2O = L-homocysteine + adenosine. The protein operates within amino-acid biosynthesis; L-homocysteine biosynthesis; L-homocysteine from S-adenosyl-L-homocysteine: step 1/1. In terms of biological role, may play a key role in the regulation of the intracellular concentration of adenosylhomocysteine. This chain is Adenosylhomocysteinase, found in Prochlorococcus marinus (strain MIT 9303).